We begin with the raw amino-acid sequence, 182 residues long: Small ribosomal subunit protein uS5 (182 aa).

The S5 DRBM domain occupies 16 to 79 (FVDRLVHINR…EAAKRGMIYV (64 aa)).

The protein belongs to the universal ribosomal protein uS5 family. As to quaternary structure, part of the 30S ribosomal subunit. Contacts proteins S4 and S8.

Functionally, with S4 and S12 plays an important role in translational accuracy. In terms of biological role, located at the back of the 30S subunit body where it stabilizes the conformation of the head with respect to the body. This is Small ribosomal subunit protein uS5 from Bartonella quintana (strain Toulouse) (Rochalimaea quintana).